The following is a 362-amino-acid chain: Beta-ketoacyl-[acyl-carrier-protein] synthase III 2 (362 aa).

Catalysis depends on residues Cys-113 and His-251. Residues 252 to 256 are ACP-binding; it reads QANIR. Residue Asn-281 is part of the active site.

It belongs to the thiolase-like superfamily. FabH family. As to quaternary structure, homodimer.

Its subcellular location is the cytoplasm. It catalyses the reaction malonyl-[ACP] + acetyl-CoA + H(+) = 3-oxobutanoyl-[ACP] + CO2 + CoA. Its pathway is lipid metabolism; fatty acid biosynthesis. Its function is as follows. Catalyzes the condensation reaction of fatty acid synthesis by the addition to an acyl acceptor of two carbons from malonyl-ACP. Catalyzes the first condensation reaction which initiates fatty acid synthesis and may therefore play a role in governing the total rate of fatty acid production. Possesses both acetoacetyl-ACP synthase and acetyl transacylase activities. Its substrate specificity determines the biosynthesis of branched-chain and/or straight-chain of fatty acids. This chain is Beta-ketoacyl-[acyl-carrier-protein] synthase III 2, found in Vibrio vulnificus (strain YJ016).